An 89-amino-acid chain; its full sequence is Co-chaperonin GroES (89 aa).

It belongs to the GroES chaperonin family. As to quaternary structure, heptamer of 7 subunits arranged in a ring. Interacts with the chaperonin GroEL.

It is found in the cytoplasm. Together with the chaperonin GroEL, plays an essential role in assisting protein folding. The GroEL-GroES system forms a nano-cage that allows encapsulation of the non-native substrate proteins and provides a physical environment optimized to promote and accelerate protein folding. GroES binds to the apical surface of the GroEL ring, thereby capping the opening of the GroEL channel. In Wolinella succinogenes (strain ATCC 29543 / DSM 1740 / CCUG 13145 / JCM 31913 / LMG 7466 / NCTC 11488 / FDC 602W) (Vibrio succinogenes), this protein is Co-chaperonin GroES.